We begin with the raw amino-acid sequence, 215 residues long: Cytokinin riboside 5'-monophosphate phosphoribohydrolase LOG4 (215 aa).

Substrate-binding positions include Glu-84, 102–103, 119–125, and Thr-131; these read RK and GYGTLEE.

This sequence belongs to the LOG family. As to expression, expressed in roots and shoots. Detected in root procambium, lateral root primordia, vascular tissues of cotyledons, leaves and stems, shoot apical meristem, axillary buds, young inflorescences, fruit abscission zones and basal part of ovules.

The protein resides in the cytoplasm. It localises to the nucleus. It catalyses the reaction N(6)-(dimethylallyl)adenosine 5'-phosphate + H2O = N(6)-dimethylallyladenine + D-ribose 5-phosphate. It carries out the reaction 9-ribosyl-trans-zeatin 5'-phosphate + H2O = trans-zeatin + D-ribose 5-phosphate. Functionally, cytokinin-activating enzyme working in the direct activation pathway. Phosphoribohydrolase that converts inactive cytokinin nucleotides to the biologically active free-base forms. This is Cytokinin riboside 5'-monophosphate phosphoribohydrolase LOG4 (LOG4) from Arabidopsis thaliana (Mouse-ear cress).